A 539-amino-acid chain; its full sequence is Glucans biosynthesis protein D (539 aa).

The segment at residues 1–29 (MNRRNLLKASMALAAYGSVSASGLFAARA) is a signal peptide (tat-type signal).

The protein belongs to the OpgD/OpgG family. Predicted to be exported by the Tat system. The position of the signal peptide cleavage has not been experimentally proven.

The protein resides in the periplasm. Its pathway is glycan metabolism; osmoregulated periplasmic glucan (OPG) biosynthesis. Its function is as follows. Probably involved in the control of the structural glucose backbone of osmoregulated periplasmic glucans (OPGs). This is Glucans biosynthesis protein D from Pseudomonas syringae pv. syringae (strain B728a).